Consider the following 310-residue polypeptide: Acetyl-coenzyme A carboxylase carboxyl transferase subunit beta, chloroplastic (310 aa).

Positions 47–310 (LWARCDNCGN…LYLSVPYNKN (264 aa)) constitute a CoA carboxyltransferase N-terminal domain. Positions 51, 54, 70, and 73 each coordinate Zn(2+). A C4-type zinc finger spans residues 51–73 (CDNCGNMLYVKFLKQNRSVCEEC).

This sequence belongs to the AccD/PCCB family. Acetyl-CoA carboxylase is a heterohexamer composed of biotin carboxyl carrier protein, biotin carboxylase and 2 subunits each of ACCase subunit alpha and ACCase plastid-coded subunit beta (accD). It depends on Zn(2+) as a cofactor.

Its subcellular location is the plastid. The protein localises to the chloroplast stroma. The enzyme catalyses N(6)-carboxybiotinyl-L-lysyl-[protein] + acetyl-CoA = N(6)-biotinyl-L-lysyl-[protein] + malonyl-CoA. Its pathway is lipid metabolism; malonyl-CoA biosynthesis; malonyl-CoA from acetyl-CoA: step 1/1. Its function is as follows. Component of the acetyl coenzyme A carboxylase (ACC) complex. Biotin carboxylase (BC) catalyzes the carboxylation of biotin on its carrier protein (BCCP) and then the CO(2) group is transferred by the transcarboxylase to acetyl-CoA to form malonyl-CoA. This is Acetyl-coenzyme A carboxylase carboxyl transferase subunit beta, chloroplastic from Adiantum capillus-veneris (Maidenhair fern).